The sequence spans 102 residues: Protein translation factor SUI1 homolog (102 aa).

This sequence belongs to the SUI1 family.

In Methanosarcina acetivorans (strain ATCC 35395 / DSM 2834 / JCM 12185 / C2A), this protein is Protein translation factor SUI1 homolog.